The following is a 262-amino-acid chain: Carboxy-S-adenosyl-L-methionine synthase (262 aa).

Residues tyrosine 50, 84–86 (GCS), 137–138 (DI), asparagine 152, and arginine 219 each bind S-adenosyl-L-methionine.

Belongs to the class I-like SAM-binding methyltransferase superfamily. Cx-SAM synthase family. Homodimer.

It carries out the reaction prephenate + S-adenosyl-L-methionine = carboxy-S-adenosyl-L-methionine + 3-phenylpyruvate + H2O. Catalyzes the conversion of S-adenosyl-L-methionine (SAM) to carboxy-S-adenosyl-L-methionine (Cx-SAM). The sequence is that of Carboxy-S-adenosyl-L-methionine synthase from Psychrobacter arcticus (strain DSM 17307 / VKM B-2377 / 273-4).